A 61-amino-acid polypeptide reads, in one-letter code: Small ribosomal subunit protein uS14 (61 aa).

Residues Cys24, Cys27, Cys40, and Cys43 each coordinate Zn(2+).

Belongs to the universal ribosomal protein uS14 family. Zinc-binding uS14 subfamily. As to quaternary structure, part of the 30S ribosomal subunit. Contacts proteins S3 and S10. The cofactor is Zn(2+).

Its function is as follows. Binds 16S rRNA, required for the assembly of 30S particles and may also be responsible for determining the conformation of the 16S rRNA at the A site. In Borreliella afzelii (strain PKo) (Borrelia afzelii), this protein is Small ribosomal subunit protein uS14.